The sequence spans 450 residues: Tryptophan dimethylallyltransferase 2 (450 aa).

Residues 80–81 (IL) and Glu89 each bind L-tryptophan. 3 residues coordinate substrate: Arg100, Lys186, and Tyr188. L-tryptophan-binding residues include Tyr190 and Arg251. Positions 264, 266, 268, 350, 352, 416, and 420 each coordinate substrate.

This sequence belongs to the tryptophan dimethylallyltransferase family. In terms of assembly, homodimer.

It carries out the reaction L-tryptophan + dimethylallyl diphosphate = 4-(3-methylbut-2-enyl)-L-tryptophan + diphosphate. Its pathway is alkaloid biosynthesis; ergot alkaloid biosynthesis. In terms of biological role, catalyzes the first step of ergot alkaloid biosynthesis. Ergot alkaloids, which are produced by endophyte fungi, can enhance plant host fitness, but also cause livestock toxicosis to host plants. The polypeptide is Tryptophan dimethylallyltransferase 2 (dmaW2) (Epichloe coenophiala (Tall fescue endophyte fungus)).